The sequence spans 135 residues: MPPKTRSQTGAKKVRRKEKKNVAHGHAHIKSTFNNTIVSITDPSGAVIAWASAGQVGFKGSRKSTPFAAQMTAEAAARRAQEHGMRKVDVFVKGPGSGRETAIRSLQAVGLEVGSIQDVTPVPHNGCRPPKRRRV.

Residues 1 to 10 (MPPKTRSQTG) show a composition bias toward polar residues. Positions 1 to 28 (MPPKTRSQTGAKKVRRKEKKNVAHGHAH) are disordered. Residues 12–28 (KKVRRKEKKNVAHGHAH) show a composition bias toward basic residues.

Belongs to the universal ribosomal protein uS11 family. As to quaternary structure, part of the 30S ribosomal subunit. Interacts with proteins S7 and S18. Binds to IF-3.

Located on the platform of the 30S subunit, it bridges several disparate RNA helices of the 16S rRNA. Forms part of the Shine-Dalgarno cleft in the 70S ribosome. The chain is Small ribosomal subunit protein uS11 from Acidothermus cellulolyticus (strain ATCC 43068 / DSM 8971 / 11B).